A 463-amino-acid chain; its full sequence is Thiamine-repressible acid phosphatase pho4 (463 aa).

The signal sequence occupies residues 1 to 18 (MKLSGISLWLLAASIVHA). His69 acts as the Nucleophile in catalysis. Residues Asn98, Asn104, Asn186, Asn221, Asn251, and Asn328 are each glycosylated (N-linked (GlcNAc...) asparagine). Asp341 (proton donor) is an active-site residue. 3 N-linked (GlcNAc...) asparagine glycosylation sites follow: Asn433, Asn439, and Asn458.

It belongs to the histidine acid phosphatase family.

The protein localises to the secreted. Its subcellular location is the cell wall. It carries out the reaction a phosphate monoester + H2O = an alcohol + phosphate. May dephosphorylate thiamine phosphates. The chain is Thiamine-repressible acid phosphatase pho4 (pho4) from Schizosaccharomyces pombe (strain 972 / ATCC 24843) (Fission yeast).